We begin with the raw amino-acid sequence, 244 residues long: Large ribosomal subunit protein uL30w (244 aa).

Belongs to the universal ribosomal protein uL30 family.

The polypeptide is Large ribosomal subunit protein uL30w (RPL7D) (Arabidopsis thaliana (Mouse-ear cress)).